The primary structure comprises 424 residues: MSPNSKGVEILSIGTELLLGNIINTNAQWISEQLSQLGLNHFRQSTVGDNCDRIVRVIQEISKRSNLLITTGGLGPTPDDLTTEAIAKSFNVTLFERPHLWDEIKQKLPNSKLHEDSSSLRKQCFFPKNAQIINNPRGTAPGMIWEPIKGFTILTFPGVPSEMKTMWEETAYDFIQTKFSDTYSFFSNTLKFAGIGESSVAEKINDLLNLKNPTVAPYANLGEVKLRITARAKNEVEAKNIIKPIKEKLKQEFSKFIFGEDNDTLPSILIKELTKRKQTIVFAESCTGGLLSASLTSISGSSQVFQGSIVSYSNELKHLLLDISEEKLAKYGAVSEEVCEAMAINVKKKLRADWAISISGIAGPNGGSQNKPVGLVYISISGPNNYITTIKKQFNSTRNRLEIQTLSVNVCLNSLRLILLSDSK.

This sequence belongs to the CinA family.

This Prochlorococcus marinus (strain MIT 9301) protein is CinA-like protein.